The following is an 81-amino-acid chain: ATP synthase subunit c (81 aa).

The next 2 helical transmembrane spans lie at 5 to 25 (IAAG…IGAG) and 57 to 77 (VGLV…FVFA).

This sequence belongs to the ATPase C chain family. In terms of assembly, F-type ATPases have 2 components, F(1) - the catalytic core - and F(0) - the membrane proton channel. F(1) has five subunits: alpha(3), beta(3), gamma(1), delta(1), epsilon(1). F(0) has three main subunits: a(1), b(2) and c(10-14). The alpha and beta chains form an alternating ring which encloses part of the gamma chain. F(1) is attached to F(0) by a central stalk formed by the gamma and epsilon chains, while a peripheral stalk is formed by the delta and b chains.

It is found in the cell membrane. Its function is as follows. F(1)F(0) ATP synthase produces ATP from ADP in the presence of a proton or sodium gradient. F-type ATPases consist of two structural domains, F(1) containing the extramembraneous catalytic core and F(0) containing the membrane proton channel, linked together by a central stalk and a peripheral stalk. During catalysis, ATP synthesis in the catalytic domain of F(1) is coupled via a rotary mechanism of the central stalk subunits to proton translocation. In terms of biological role, key component of the F(0) channel; it plays a direct role in translocation across the membrane. A homomeric c-ring of between 10-14 subunits forms the central stalk rotor element with the F(1) delta and epsilon subunits. The sequence is that of ATP synthase subunit c from Mycobacterium sp. (strain JLS).